The primary structure comprises 367 residues: Aspartate-semialdehyde dehydrogenase (367 aa).

NADP(+)-binding positions include 10-13, 37-38, and Gln73; these read RGMV and TS. Arg102 contacts phosphate. Cys135 acts as the Acyl-thioester intermediate in catalysis. S-cysteinyl cysteine; in inhibited form is present on Cys135. Gln162 provides a ligand contact to substrate. Residues 165-166 and Pro193 contribute to the NADP(+) site; that span reads SG. Glu241 lines the substrate pocket. Lys244 is a phosphate binding site. Position 267 (Arg267) interacts with substrate. His274 serves as the catalytic Proton acceptor. Gln350 contacts NADP(+).

Belongs to the aspartate-semialdehyde dehydrogenase family. As to quaternary structure, homodimer.

It carries out the reaction L-aspartate 4-semialdehyde + phosphate + NADP(+) = 4-phospho-L-aspartate + NADPH + H(+). The protein operates within amino-acid biosynthesis; L-lysine biosynthesis via DAP pathway; (S)-tetrahydrodipicolinate from L-aspartate: step 2/4. It functions in the pathway amino-acid biosynthesis; L-methionine biosynthesis via de novo pathway; L-homoserine from L-aspartate: step 2/3. Its pathway is amino-acid biosynthesis; L-threonine biosynthesis; L-threonine from L-aspartate: step 2/5. Functionally, catalyzes the NADPH-dependent formation of L-aspartate-semialdehyde (L-ASA) by the reductive dephosphorylation of L-aspartyl-4-phosphate. This chain is Aspartate-semialdehyde dehydrogenase, found in Escherichia coli O6:H1 (strain CFT073 / ATCC 700928 / UPEC).